A 226-amino-acid chain; its full sequence is UPF0173 metal-dependent hydrolase Dgeo_0136 (226 aa).

This sequence belongs to the UPF0173 family.

This Deinococcus geothermalis (strain DSM 11300 / CIP 105573 / AG-3a) protein is UPF0173 metal-dependent hydrolase Dgeo_0136.